A 268-amino-acid polypeptide reads, in one-letter code: Tryptophan synthase alpha chain (268 aa).

Residues glutamate 49 and aspartate 60 each act as proton acceptor in the active site.

Belongs to the TrpA family. Tetramer of two alpha and two beta chains.

The enzyme catalyses (1S,2R)-1-C-(indol-3-yl)glycerol 3-phosphate + L-serine = D-glyceraldehyde 3-phosphate + L-tryptophan + H2O. It functions in the pathway amino-acid biosynthesis; L-tryptophan biosynthesis; L-tryptophan from chorismate: step 5/5. Its function is as follows. The alpha subunit is responsible for the aldol cleavage of indoleglycerol phosphate to indole and glyceraldehyde 3-phosphate. The polypeptide is Tryptophan synthase alpha chain (Vibrio vulnificus (strain CMCP6)).